The chain runs to 210 residues: Dynactin-associated protein (210 aa).

The Cytoplasmic portion of the chain corresponds to Met1 to Lys113. A helical; Signal-anchor for type II membrane protein transmembrane segment spans residues Val114–Cys134. Over Leu135–Leu210 the chain is Extracellular. The tract at residues Ala168–Leu210 is disordered. The span at Pro171–Thr203 shows a compositional bias: low complexity.

In terms of assembly, interacts with DCTN1 and DCTN2. Expressed in fibroblast and numerous cancer cell lines (at protein level).

It is found in the golgi apparatus membrane. The protein localises to the cell membrane. Its function is as follows. Plays a role in the regulation of cell proliferation. Promotes activation of the AKT1 signaling pathway. Promotes phosphorylation of AKT1 at 'Ser-473'. The chain is Dynactin-associated protein (DYNAP) from Homo sapiens (Human).